We begin with the raw amino-acid sequence, 307 residues long: Acyl transferase (307 aa).

Catalysis depends on charge relay system residues Ser116, Asp213, and His243.

It belongs to the LuxD family.

It participates in lipid metabolism; fatty acid reduction for biolumincescence. Acyl transferase is part of the fatty acid reductase system required for aldehyde biosynthesis; it produces fatty acids for the luminescent reaction. The chain is Acyl transferase from Aliivibrio fischeri (strain ATCC 700601 / ES114) (Vibrio fischeri).